The sequence spans 353 residues: Photosystem II protein D1 (353 aa).

An N-acetylthreonine modification is found at Thr2. Thr2 is subject to Phosphothreonine. 3 helical membrane passes run 29–46, 118–133, and 142–156; these read YIGW…TATS, HFLL…EWEL, and WIAV…AATA. His118 serves as a coordination point for chlorophyll a. Residue Tyr126 participates in pheophytin a binding. Asp170 and Glu189 together coordinate [CaMn4O5] cluster. A helical transmembrane segment spans residues 197 to 218; it reads FHMLGVAGVFGGSLFSAMHGSL. His198 provides a ligand contact to chlorophyll a. A quinone is bound by residues His215 and 264–265; that span reads SF. Position 215 (His215) interacts with Fe cation. His272 lines the Fe cation pocket. The helical transmembrane segment at 274 to 288 threads the bilayer; it reads FLAAWPVVGIWFTAL. [CaMn4O5] cluster-binding residues include His332, Glu333, Asp342, and Ala344. The propeptide occupies 345–353; it reads AVEVPSTNG.

The protein belongs to the reaction center PufL/M/PsbA/D family. PSII is composed of 1 copy each of membrane proteins PsbA, PsbB, PsbC, PsbD, PsbE, PsbF, PsbH, PsbI, PsbJ, PsbK, PsbL, PsbM, PsbT, PsbX, PsbY, PsbZ, Psb30/Ycf12, at least 3 peripheral proteins of the oxygen-evolving complex and a large number of cofactors. It forms dimeric complexes. The D1/D2 heterodimer binds P680, chlorophylls that are the primary electron donor of PSII, and subsequent electron acceptors. It shares a non-heme iron and each subunit binds pheophytin, quinone, additional chlorophylls, carotenoids and lipids. D1 provides most of the ligands for the Mn4-Ca-O5 cluster of the oxygen-evolving complex (OEC). There is also a Cl(-1) ion associated with D1 and D2, which is required for oxygen evolution. The PSII complex binds additional chlorophylls, carotenoids and specific lipids. is required as a cofactor. In terms of processing, tyr-161 forms a radical intermediate that is referred to as redox-active TyrZ, YZ or Y-Z. Post-translationally, C-terminally processed by CTPA; processing is essential to allow assembly of the oxygen-evolving complex and thus photosynthetic growth.

The protein resides in the plastid. The protein localises to the chloroplast thylakoid membrane. The enzyme catalyses 2 a plastoquinone + 4 hnu + 2 H2O = 2 a plastoquinol + O2. Its function is as follows. Photosystem II (PSII) is a light-driven water:plastoquinone oxidoreductase that uses light energy to abstract electrons from H(2)O, generating O(2) and a proton gradient subsequently used for ATP formation. It consists of a core antenna complex that captures photons, and an electron transfer chain that converts photonic excitation into a charge separation. The D1/D2 (PsbA/PsbD) reaction center heterodimer binds P680, the primary electron donor of PSII as well as several subsequent electron acceptors. This Calycanthus floridus var. glaucus (Eastern sweetshrub) protein is Photosystem II protein D1.